A 609-amino-acid chain; its full sequence is mRNA cap guanine-N(7) methyltransferase (609 aa).

Basic and acidic residues predominate over residues 1–10 (MASKEEERTG). A disordered region spans residues 1–252 (MASKEEERTG…EEDAMRNSQS (252 aa)). Low complexity-rich tracts occupy residues 28-47 (QPVV…ATPT) and 70-87 (PQTT…QQKQ). A compositionally biased stretch (basic and acidic residues) spans 148–163 (ANDRPISKRKRLEERH). Residues 193–205 (PRSPSPPLPPRSP) show a composition bias toward pro residues. Positions 233–247 (RRQEERERALEEDAM) are enriched in basic and acidic residues. In terms of domain architecture, mRNA cap 0 methyltransferase spans 278-590 (SKIKGLRSFN…KYTPLGFTSA (313 aa)). MRNA is bound at residue 287 to 288 (NN). S-adenosyl-L-methionine-binding positions include lysine 291, glycine 314, aspartate 338, aspartate 379, 422 to 424 (MFA), and tyrosine 427.

It belongs to the class I-like SAM-binding methyltransferase superfamily. mRNA cap 0 methyltransferase family.

It localises to the nucleus. The catalysed reaction is a 5'-end (5'-triphosphoguanosine)-ribonucleoside in mRNA + S-adenosyl-L-methionine = a 5'-end (N(7)-methyl 5'-triphosphoguanosine)-ribonucleoside in mRNA + S-adenosyl-L-homocysteine. Responsible for methylating the 5'-cap structure of mRNAs. This chain is mRNA cap guanine-N(7) methyltransferase (abd1), found in Aspergillus niger (strain ATCC MYA-4892 / CBS 513.88 / FGSC A1513).